A 472-amino-acid chain; its full sequence is DEAD-box ATP-dependent RNA helicase 58, chloroplastic (472 aa).

A chloroplast-targeting transit peptide spans Met1–Val54. The short motif at Arg76–Arg104 is the Q motif element. A Helicase ATP-binding domain is found at Leu107–Arg286. Ala120–Thr127 serves as a coordination point for ATP. The short motif at Asp231–Asp234 is the DEAD box element. Residues Asn314–Leu472 enclose the Helicase C-terminal domain.

This sequence belongs to the DEAD box helicase family.

It localises to the plastid. The protein localises to the chloroplast. The enzyme catalyses ATP + H2O = ADP + phosphate + H(+). The polypeptide is DEAD-box ATP-dependent RNA helicase 58, chloroplastic (RH58) (Arabidopsis thaliana (Mouse-ear cress)).